A 574-amino-acid chain; its full sequence is Cholinesterase (574 aa).

Asn-57 carries N-linked (GlcNAc...) asparagine glycosylation. Cys-65 and Cys-92 are joined by a disulfide. Asn-106 carries N-linked (GlcNAc...) asparagine glycosylation. 116–117 (GG) contacts substrate. The active-site Acyl-ester intermediate is Ser-198. At Ser-198 the chain carries Phosphoserine. Residues Asn-241 and Asn-256 are each glycosylated (N-linked (GlcNAc...) asparagine). Cys-252 and Cys-263 are oxidised to a cystine. Glu-325 (charge relay system) is an active-site residue. Asn-341 carries N-linked (GlcNAc...) asparagine glycosylation. A disulfide bridge connects residues Cys-400 and Cys-519. His-438 functions as the Charge relay system in the catalytic mechanism. Asn-455, Asn-481, and Asn-486 each carry an N-linked (GlcNAc...) asparagine glycan.

This sequence belongs to the type-B carboxylesterase/lipase family. As to quaternary structure, homotetramer; disulfide-linked. Dimer of dimers. Detected in blood plasma (at protein level). Present in most cells except erythrocytes.

It is found in the secreted. It catalyses the reaction an acylcholine + H2O = a carboxylate + choline + H(+). Esterase with broad substrate specificity. Contributes to the inactivation of the neurotransmitter acetylcholine. Can degrade neurotoxic organophosphate esters. This chain is Cholinesterase (BCHE), found in Equus caballus (Horse).